Here is a 316-residue protein sequence, read N- to C-terminus: Ecto-ADP-ribosyltransferase 5 (316 aa).

The signal sequence occupies residues 1-23 (MIQATLLISLSCLSFYTLGSGVR). The cysteines at positions 50 and 266 are disulfide-linked. N-linked (GlcNAc...) asparagine glycosylation is present at N68. Residues 70 to 261 (TRLRESWETA…MTLSSSDQMC (192 aa)) enclose the TR mART core domain. Y107 contributes to the NAD(+) binding site. N-linked (GlcNAc...) asparagine glycosylation occurs at N109. Positions 168 and 188 each coordinate NAD(+). R168 is a catalytic residue. Residue S191 is part of the active site. S222 contacts NAD(+). E229 is a catalytic residue. N242 and N248 each carry an N-linked (GlcNAc...) asparagine glycan.

The protein belongs to the Arg-specific ADP-ribosyltransferase family.

Its subcellular location is the secreted. It localises to the membrane. It catalyses the reaction L-arginyl-[protein] + NAD(+) = N(omega)-(ADP-D-ribosyl)-L-arginyl-[protein] + nicotinamide + H(+). This is Ecto-ADP-ribosyltransferase 5 (ART5) from Bos taurus (Bovine).